The chain runs to 233 residues: 3-dehydroquinate dehydratase (233 aa).

Residues 39 to 41 and arginine 73 contribute to the 3-dehydroquinate site; that span reads EIR. Histidine 132 functions as the Proton donor/acceptor in the catalytic mechanism. Lysine 159 (schiff-base intermediate with substrate) is an active-site residue. Residues arginine 196 and glutamine 219 each coordinate 3-dehydroquinate.

Belongs to the type-I 3-dehydroquinase family. In terms of assembly, homodimer.

The catalysed reaction is 3-dehydroquinate = 3-dehydroshikimate + H2O. It participates in metabolic intermediate biosynthesis; chorismate biosynthesis; chorismate from D-erythrose 4-phosphate and phosphoenolpyruvate: step 3/7. Involved in the third step of the chorismate pathway, which leads to the biosynthesis of aromatic amino acids. Catalyzes the cis-dehydration of 3-dehydroquinate (DHQ) and introduces the first double bond of the aromatic ring to yield 3-dehydroshikimate. The polypeptide is 3-dehydroquinate dehydratase (Methanococcoides burtonii (strain DSM 6242 / NBRC 107633 / OCM 468 / ACE-M)).